Here is an 88-residue protein sequence, read N- to C-terminus: Adenylosuccinate lyase (88 aa).

Residues 4–5 and 67–69 each bind N(6)-(1,2-dicarboxyethyl)-AMP; these read RY and KHD.

The protein belongs to the lyase 1 family. Adenylosuccinate lyase subfamily. Homotetramer and homodimer. Residues from neighboring subunits contribute catalytic and substrate-binding residues to each active site.

The catalysed reaction is N(6)-(1,2-dicarboxyethyl)-AMP = fumarate + AMP. It carries out the reaction (2S)-2-[5-amino-1-(5-phospho-beta-D-ribosyl)imidazole-4-carboxamido]succinate = 5-amino-1-(5-phospho-beta-D-ribosyl)imidazole-4-carboxamide + fumarate. Its pathway is purine metabolism; AMP biosynthesis via de novo pathway; AMP from IMP: step 2/2. It functions in the pathway purine metabolism; IMP biosynthesis via de novo pathway; 5-amino-1-(5-phospho-D-ribosyl)imidazole-4-carboxamide from 5-amino-1-(5-phospho-D-ribosyl)imidazole-4-carboxylate: step 2/2. Catalyzes two reactions in de novo purine nucleotide biosynthesis. Catalyzes the breakdown of 5-aminoimidazole- (N-succinylocarboxamide) ribotide (SAICAR or 2-[5-amino-1-(5-phospho-beta-D-ribosyl)imidazole-4-carboxamido]succinate) to 5-aminoimidazole-4-carboxamide ribotide (AICAR or 5-amino-1-(5-phospho-beta-D-ribosyl)imidazole-4-carboxamide) and fumarate, and of adenylosuccinate (ADS or N(6)-(1,2-dicarboxyethyl)-AMP) to adenosine monophosphate (AMP) and fumarate. In Spiroplasma citri, this protein is Adenylosuccinate lyase (purB).